A 984-amino-acid polypeptide reads, in one-letter code: Probable beta-galactosidase C (984 aa).

Residues 1-23 (MRLLSFIYLVWLALLTGTPQVSA) form the signal peptide. 5 residues coordinate substrate: tyrosine 82, asparagine 127, alanine 128, glutamate 129, and asparagine 187. The active-site Proton donor is glutamate 188. Asparagine 197 carries N-linked (GlcNAc...) asparagine glycosylation. Tyrosine 251 contacts substrate. Cysteines 257 and 304 form a disulfide. N-linked (GlcNAc...) asparagine glycosylation is present at asparagine 276. The Nucleophile role is filled by glutamate 287. Tyrosine 353 contacts substrate. 10 N-linked (GlcNAc...) asparagine glycosylation sites follow: asparagine 391, asparagine 421, asparagine 434, asparagine 517, asparagine 602, asparagine 677, asparagine 715, asparagine 720, asparagine 759, and asparagine 805.

The protein belongs to the glycosyl hydrolase 35 family.

Its subcellular location is the secreted. It catalyses the reaction Hydrolysis of terminal non-reducing beta-D-galactose residues in beta-D-galactosides.. Its function is as follows. Cleaves beta-linked terminal galactosyl residues from gangliosides, glycoproteins, and glycosaminoglycans. The chain is Probable beta-galactosidase C (lacC) from Aspergillus flavus (strain ATCC 200026 / FGSC A1120 / IAM 13836 / NRRL 3357 / JCM 12722 / SRRC 167).